A 216-amino-acid chain; its full sequence is Transmembrane emp24 domain-containing protein eca (216 aa).

The first 20 residues, 1-20 (MRNQFICVALLLCALNSACG), serve as a signal peptide directing secretion. The Lumenal segment spans residues 21-183 (LYFHISETER…RHTSESTNSR (163 aa)). The GOLD domain maps to 30 to 126 (RKCFIEEVPD…QLRVHLDIQV (97 aa)). The stretch at 134–164 (ANVAQKEKLTELQLRIRQLLDQVDQITKEQN) forms a coiled coil. The chain crosses the membrane as a helical span at residues 184–203 (VLWWSLAQTVVLVCMGFWQM). At 204–216 (RHLKSFFEAKKLV) the chain is on the cytoplasmic side. The Prevents secretion from ER signature appears at 213–216 (KKLV).

Belongs to the EMP24/GP25L family.

The protein resides in the endoplasmic reticulum membrane. Eca and bai are essential, though not redundant, for dorsoventral patterning of the embryo. Specifically required during early embryogenesis for the activity of maternal tkv, while the zygotic tkv is not affected. Involved in Golgi organization. The sequence is that of Transmembrane emp24 domain-containing protein eca from Drosophila willistoni (Fruit fly).